We begin with the raw amino-acid sequence, 476 residues long: Glucan endo-1,3-beta-glucosidase 9 (476 aa).

Residues 1 to 25 form the signal peptide; it reads MARRLFLLLLAVTAGLSLTGTTVRA. Asn-88 and Asn-101 each carry an N-linked (GlcNAc...) asparagine glycan. Residue Glu-122 is the Proton donor of the active site. Residues Asn-184, Asn-216, Asn-277, Asn-320, Asn-342, Asn-374, and Asn-405 are each glycosylated (N-linked (GlcNAc...) asparagine). A disulfide bridge links Cys-364 with Cys-424. Ser-453 carries GPI-anchor amidated serine lipidation. The propeptide at 454–476 is removed in mature form; that stretch reads SSQTPNFFQSWPLLLLFLLSGLF.

It belongs to the glycosyl hydrolase 17 family. In terms of processing, contains two additional disulfide bonds.

Its subcellular location is the secreted. The protein resides in the cell wall. It is found in the cell membrane. It carries out the reaction Hydrolysis of (1-&gt;3)-beta-D-glucosidic linkages in (1-&gt;3)-beta-D-glucans.. The chain is Glucan endo-1,3-beta-glucosidase 9 from Arabidopsis thaliana (Mouse-ear cress).